A 101-amino-acid chain; its full sequence is Large ribosomal subunit protein uL23 (101 aa).

Belongs to the universal ribosomal protein uL23 family. Part of the 50S ribosomal subunit. Contacts protein L29, and trigger factor when it is bound to the ribosome.

One of the early assembly proteins it binds 23S rRNA. One of the proteins that surrounds the polypeptide exit tunnel on the outside of the ribosome. Forms the main docking site for trigger factor binding to the ribosome. The chain is Large ribosomal subunit protein uL23 from Corynebacterium diphtheriae (strain ATCC 700971 / NCTC 13129 / Biotype gravis).